Here is a 355-residue protein sequence, read N- to C-terminus: Squamosa promoter-binding protein-like 15 (355 aa).

Residues 1–27 are disordered; that stretch reads MELLKGSGLNQTESGGSSSTESSSLSG. The span at 12–27 shows a compositional bias: low complexity; the sequence is TESGGSSSTESSSLSG. Residues 61 to 138 form an SBP-type zinc finger; it reads TARCQVEGCR…ACHNERRRKP (78 aa). The Zn(2+) site is built by Cys64, Cys69, Cys86, His89, Cys105, Cys108, His112, and Cys124. Residues 121–137 carry the Bipartite nuclear localization signal motif; it reads KRSCRRRLACHNERRRK.

The protein resides in the nucleus. Probable transcription factor required for the flowering response to vernalization in the shoot apical meristem (SAM). Defines the competence of shoot meristems to flower in response to vernalization in perennials. The protein is Squamosa promoter-binding protein-like 15 of Arabis alpina (Alpine rock-cress).